Reading from the N-terminus, the 155-residue chain is Gas vesicle protein K (155 aa).

Belongs to the gas vesicle GvpK family.

The protein resides in the gas vesicle. Might be involved in nucleating gas vesicle formation. Gas vesicles (GV) are hollow, gas filled proteinaceous nanostructures. During planktonic growth they allow positioning of the organism at a favorable depth for light or nutrient acquisition. This Dolichospermum flosaquae (Anabaena flos-aquae) protein is Gas vesicle protein K.